A 211-amino-acid chain; its full sequence is Large ribosomal subunit protein uL3 (211 aa).

It belongs to the universal ribosomal protein uL3 family. As to quaternary structure, part of the 50S ribosomal subunit. Forms a cluster with proteins L14 and L19.

Its function is as follows. One of the primary rRNA binding proteins, it binds directly near the 3'-end of the 23S rRNA, where it nucleates assembly of the 50S subunit. This Desulfatibacillum aliphaticivorans protein is Large ribosomal subunit protein uL3.